The sequence spans 604 residues: Kelch-like protein 20 (604 aa).

Positions Cys63 to Glu130 constitute a BTB domain. A BACK domain is found at Cys165–Gly267. 6 Kelch repeats span residues Val314–Asp360, Leu362–Gly408, Phe409–Gly455, Leu457–Asp502, Ile504–Gly549, and Leu551–Met596.

In terms of assembly, component of the BCR(KLHL20) E3 ubiquitin ligase complex, at least composed of CUL3, KLHL20 and RBX1. Interacts with PDZ-RhoGEF/ARHGEF11, DAPK1, PML and CORO7. Interacts with F-actin. Interacts with IFN-gamma (IFNG). Interacts (via kelch repeats) with IVNS1ABP (via kelch repeats); this interaction blocks the assembly of CUL3-KLHL20 complex.

The protein resides in the cytoplasm. The protein localises to the perinuclear region. It is found in the nucleus. It localises to the golgi apparatus. Its subcellular location is the trans-Golgi network. The protein resides in the cell projection. The protein localises to the axon. It is found in the dendrite. It functions in the pathway protein modification; protein ubiquitination. Its function is as follows. Substrate-specific adapter of a BCR (BTB-CUL3-RBX1) E3 ubiquitin-protein ligase complex involved in interferon response and anterograde Golgi to endosome transport. The BCR(KLHL20) E3 ubiquitin ligase complex mediates the ubiquitination of DAPK1, leading to its degradation by the proteasome, thereby acting as a negative regulator of apoptosis. The BCR(KLHL20) E3 ubiquitin ligase complex also specifically mediates 'Lys-33'-linked ubiquitination. Involved in anterograde Golgi to endosome transport by mediating 'Lys-33'-linked ubiquitination of CORO7, promoting interaction between CORO7 and EPS15, thereby facilitating actin polymerization and post-Golgi trafficking. Also acts as a regulator of endothelial migration during angiogenesis by controlling the activation of Rho GTPases. The BCR(KLHL20) E3 ubiquitin ligase complex acts as a regulator of neurite outgrowth by mediating ubiquitination and degradation of PDZ-RhoGEF/ARHGEF11. The chain is Kelch-like protein 20 (Klhl20) from Mus musculus (Mouse).